The chain runs to 256 residues: Major prion protein (256 aa).

The N-terminal stretch at 1-24 (MVKSHIGSWILVLFVAMWSDVGLC) is a signal peptide. The tract at residues 25-233 (KKRPKPGGGW…ESQAYYQRGA (209 aa)) is interaction with GRB2, ERI3 and SYN1. The disordered stretch occupies residues 28 to 110 (PKPGGGWNTG…QWNKPSKPKT (83 aa)). 5 consecutive repeat copies span residues 54–62 (PQGGGGWGQ), 63–70 (PHGGGWGQ), 71–78 (PHGGGWGQ), 79–86 (PHGGGWGQ), and 87–95 (PHGGGGWGQ). The interval 54–95 (PQGGGGWGQPHGGGWGQPHGGGWGQPHGGGWGQPHGGGGWGQ) is 5 X 8 AA tandem repeats of P-H-G-G-G-W-G-Q. Residues 55–97 (QGGGGWGQPHGGGWGQPHGGGWGQPHGGGWGQPHGGGGWGQGG) show a composition bias toward gly residues. His-64, Gly-65, Gly-66, His-72, Gly-73, Gly-74, His-80, Gly-81, Gly-82, His-88, Gly-90, and Gly-91 together coordinate Cu(2+). Cys-182 and Cys-217 are oxidised to a cystine. Residues Asn-184 and Asn-200 are each glycosylated (N-linked (GlcNAc...) asparagine). A lipid anchor (GPI-anchor amidated alanine) is attached at Ala-233. Residues 234–256 (SVILFSPPPVILLISFLIFLIVG) constitute a propeptide, removed in mature form.

The protein belongs to the prion family. As to quaternary structure, monomer and homodimer. Has a tendency to aggregate into amyloid fibrils containing a cross-beta spine, formed by a steric zipper of superposed beta-strands. Soluble oligomers may represent an intermediate stage on the path to fibril formation. Copper binding may promote oligomerization. Interacts with GRB2, APP, ERI3/PRNPIP and SYN1. Mislocalized cytosolically exposed PrP interacts with MGRN1; this interaction alters MGRN1 subcellular location and causes lysosomal enlargement. Interacts with KIAA1191.

The protein localises to the cell membrane. The protein resides in the golgi apparatus. In terms of biological role, its primary physiological function is unclear. Has cytoprotective activity against internal or environmental stresses. May play a role in neuronal development and synaptic plasticity. May be required for neuronal myelin sheath maintenance. May play a role in iron uptake and iron homeostasis. Soluble oligomers are toxic to cultured neuroblastoma cells and induce apoptosis (in vitro). Association with GPC1 (via its heparan sulfate chains) targets PRNP to lipid rafts. Also provides Cu(2+) or Zn(2+) for the ascorbate-mediated GPC1 deaminase degradation of its heparan sulfate side chains. The sequence is that of Major prion protein (PRNP) from Capra hircus (Goat).